The primary structure comprises 532 residues: Monolignol oxidoreductase AtBBE-like 15 (532 aa).

A signal peptide spans 1 to 27 (MAFAISKRNATLFLVTLLLISVPLSSS). Cys36 and Cys100 are oxidised to a cystine. Asn57 is a glycosylation site (N-linked (GlcNAc...) asparagine). One can recognise an FAD-binding PCMH-type domain in the interval 76–254 (TPSNPKPVFI…LAWKIKLVPV (179 aa)). Positions 115-179 (HDYEGLSFVA…QTHGFPAGLC (65 aa)) form a cross-link, 6-(S-cysteinyl)-8alpha-(pros-histidyl)-FAD (His-Cys). N-linked (GlcNAc...) asparagine glycans are attached at residues Asn306 and Asn431.

It belongs to the oxygen-dependent FAD-linked oxidoreductase family. Requires FAD as cofactor. In terms of processing, the FAD cofactor is bound via a bicovalent 6-S-cysteinyl, 8alpha-N1-histidyl FAD linkage. As to expression, expressed in sepals and stamen.

It is found in the secreted. It localises to the cell wall. The enzyme catalyses (E)-4-coumaroyl alcohol + A = (E)-4-coumaraldehyde + AH2. It catalyses the reaction (E)-coniferol + A = (E)-coniferaldehyde + AH2. It carries out the reaction (E)-sinapyl alcohol + A = (E)-sinapaldehyde + AH2. The catalysed reaction is 4-O-(beta-D-glucosyl)-(E)-coniferol + A = 4-O-(beta-D-glucosyl)-4-(E)-coniferyl aldehyde + AH2. In terms of biological role, required for endosperm development and polar nuclei fusion. Mediates oxidation of p-hydroxylated derivatives of cinnamyl alcohol (i.e. the monolignols p-coumaryl-, coniferyl-, and sinapyl alcohol) to their corresponding aldehydes. Can also use the beta-O-glycosylated form of coniferyl alcohol (coniferin) as substrate, but is much less efficient towards cinnamyl alcohol. The electron acceptor required for these reactions is not known, but does not seem to be dioxygen. The chain is Monolignol oxidoreductase AtBBE-like 15 from Arabidopsis thaliana (Mouse-ear cress).